We begin with the raw amino-acid sequence, 337 residues long: tRNA N6-adenosine threonylcarbamoyltransferase (337 aa).

Residues histidine 111 and histidine 115 each coordinate Fe cation. Substrate is bound by residues 134-138, aspartate 167, glycine 180, and asparagine 272; that span reads LVSGG. Residue aspartate 300 coordinates Fe cation.

The protein belongs to the KAE1 / TsaD family. Fe(2+) serves as cofactor.

The protein localises to the cytoplasm. The enzyme catalyses L-threonylcarbamoyladenylate + adenosine(37) in tRNA = N(6)-L-threonylcarbamoyladenosine(37) in tRNA + AMP + H(+). Functionally, required for the formation of a threonylcarbamoyl group on adenosine at position 37 (t(6)A37) in tRNAs that read codons beginning with adenine. Is involved in the transfer of the threonylcarbamoyl moiety of threonylcarbamoyl-AMP (TC-AMP) to the N6 group of A37, together with TsaE and TsaB. TsaD likely plays a direct catalytic role in this reaction. In Cronobacter sakazakii (strain ATCC BAA-894) (Enterobacter sakazakii), this protein is tRNA N6-adenosine threonylcarbamoyltransferase.